Consider the following 279-residue polypeptide: Formamidopyrimidine-DNA glycosylase (279 aa).

Proline 2 acts as the Schiff-base intermediate with DNA in catalysis. Residue glutamate 3 is the Proton donor of the active site. Lysine 58 serves as the catalytic Proton donor; for beta-elimination activity. Positions 92, 111, and 153 each coordinate DNA. The FPG-type zinc-finger motif lies at 238 to 272; that stretch reads TVYGKEGQSCLSCSSTIIKTKHSGRSTFYCKTCQY. Catalysis depends on arginine 262, which acts as the Proton donor; for delta-elimination activity.

Belongs to the FPG family. As to quaternary structure, monomer. It depends on Zn(2+) as a cofactor.

The enzyme catalyses Hydrolysis of DNA containing ring-opened 7-methylguanine residues, releasing 2,6-diamino-4-hydroxy-5-(N-methyl)formamidopyrimidine.. The catalysed reaction is 2'-deoxyribonucleotide-(2'-deoxyribose 5'-phosphate)-2'-deoxyribonucleotide-DNA = a 3'-end 2'-deoxyribonucleotide-(2,3-dehydro-2,3-deoxyribose 5'-phosphate)-DNA + a 5'-end 5'-phospho-2'-deoxyribonucleoside-DNA + H(+). Functionally, involved in base excision repair of DNA damaged by oxidation or by mutagenic agents. Acts as a DNA glycosylase that recognizes and removes damaged bases. Has a preference for oxidized purines, such as 7,8-dihydro-8-oxoguanine (8-oxoG). Has AP (apurinic/apyrimidinic) lyase activity and introduces nicks in the DNA strand. Cleaves the DNA backbone by beta-delta elimination to generate a single-strand break at the site of the removed base with both 3'- and 5'-phosphates. This chain is Formamidopyrimidine-DNA glycosylase, found in Rickettsia massiliae (strain Mtu5).